The sequence spans 289 residues: Delta-sarcoglycan (289 aa).

The Cytoplasmic portion of the chain corresponds to 1-37 (MPQEQYSHHRSTMPSSEGPHIYKVGIYGWRKRCLYFF). The helical; Signal-anchor for type II membrane protein transmembrane segment at 38-56 (VLLLMILILVNLAMTIWIL) threads the bilayer. The Extracellular segment spans residues 57–289 (KVMNFTIDGM…TCQINTSVCL (233 aa)). 2 N-linked (GlcNAc...) asparagine glycosylation sites follow: Asn-60 and Asn-108. 2 disulfides stabilise this stretch: Cys-263–Cys-288 and Cys-265–Cys-281. Asn-284 is a glycosylation site (N-linked (GlcNAc...) asparagine).

It belongs to the sarcoglycan beta/delta/gamma/zeta family. As to quaternary structure, interacts with FLNC. Cross-link to form 2 major subcomplexes: one consisting of SGCB, SGCD and SGCG and the other consisting of SGCB and SGCD. The association between SGCB and SGCG is particularly strong while SGCA is loosely associated with the other sarcoglycans. Interacts with DAG1. Post-translationally, disulfide bonds are present. As to expression, most strongly expressed in skeletal and heart muscle. Also detected in proliferating myoblasts.

The protein localises to the cell membrane. It localises to the sarcolemma. Its subcellular location is the cytoplasm. It is found in the cytoskeleton. In terms of biological role, component of the sarcoglycan complex, a subcomplex of the dystrophin-glycoprotein complex which forms a link between the F-actin cytoskeleton and the extracellular matrix. This is Delta-sarcoglycan (Sgcd) from Mus musculus (Mouse).